Here is a 553-residue protein sequence, read N- to C-terminus: Dihydroxy-acid dehydratase (553 aa).

Asp-78 contacts Mg(2+). Cys-119 contacts [2Fe-2S] cluster. Mg(2+) is bound by residues Asp-120 and Lys-121. Residue Lys-121 is modified to N6-carboxylysine. Cys-191 is a [2Fe-2S] cluster binding site. Glu-442 provides a ligand contact to Mg(2+). Ser-468 (proton acceptor) is an active-site residue.

It belongs to the IlvD/Edd family. Homodimer. It depends on [2Fe-2S] cluster as a cofactor. The cofactor is Mg(2+).

It catalyses the reaction (2R)-2,3-dihydroxy-3-methylbutanoate = 3-methyl-2-oxobutanoate + H2O. The catalysed reaction is (2R,3R)-2,3-dihydroxy-3-methylpentanoate = (S)-3-methyl-2-oxopentanoate + H2O. It functions in the pathway amino-acid biosynthesis; L-isoleucine biosynthesis; L-isoleucine from 2-oxobutanoate: step 3/4. It participates in amino-acid biosynthesis; L-valine biosynthesis; L-valine from pyruvate: step 3/4. Functionally, functions in the biosynthesis of branched-chain amino acids. Catalyzes the dehydration of (2R,3R)-2,3-dihydroxy-3-methylpentanoate (2,3-dihydroxy-3-methylvalerate) into 2-oxo-3-methylpentanoate (2-oxo-3-methylvalerate) and of (2R)-2,3-dihydroxy-3-methylbutanoate (2,3-dihydroxyisovalerate) into 2-oxo-3-methylbutanoate (2-oxoisovalerate), the penultimate precursor to L-isoleucine and L-valine, respectively. This is Dihydroxy-acid dehydratase from Carboxydothermus hydrogenoformans (strain ATCC BAA-161 / DSM 6008 / Z-2901).